Reading from the N-terminus, the 452-residue chain is Pup--protein ligase (452 aa).

Residue Glu9 participates in Mg(2+) binding. Position 53 (Arg53) interacts with ATP. Residue Tyr55 participates in Mg(2+) binding. Asp57 functions as the Proton acceptor in the catalytic mechanism. Glu63 is a binding site for Mg(2+). ATP is bound by residues Thr66 and Trp419.

The protein belongs to the Pup ligase/Pup deamidase family. Pup-conjugating enzyme subfamily.

The catalysed reaction is ATP + [prokaryotic ubiquitin-like protein]-L-glutamate + [protein]-L-lysine = ADP + phosphate + N(6)-([prokaryotic ubiquitin-like protein]-gamma-L-glutamyl)-[protein]-L-lysine.. It participates in protein degradation; proteasomal Pup-dependent pathway. It functions in the pathway protein modification; protein pupylation. Its function is as follows. Catalyzes the covalent attachment of the prokaryotic ubiquitin-like protein modifier Pup to the proteasomal substrate proteins, thereby targeting them for proteasomal degradation. This tagging system is termed pupylation. The ligation reaction involves the side-chain carboxylate of the C-terminal glutamate of Pup and the side-chain amino group of a substrate lysine. The chain is Pup--protein ligase from Gordonia bronchialis (strain ATCC 25592 / DSM 43247 / BCRC 13721 / JCM 3198 / KCTC 3076 / NBRC 16047 / NCTC 10667) (Rhodococcus bronchialis).